The following is a 251-amino-acid chain: Transcriptional regulator CBF1 (251 aa).

The disordered stretch occupies residues 1 to 169 (MVKSHKRTLE…VERKRRESIN (169 aa)). A compositionally biased stretch (basic and acidic residues) spans 7–28 (RTLEKDEEHQEKKKANKISKDD). The segment covering 40-56 (ASDSAHTDTATAAVAAV) has biased composition (low complexity). Polar residues predominate over residues 67-76 (TESSTNQTSA). The segment covering 77-105 (LDKDDKETKDNLNPREETQSSHQEIDIPK) has biased composition (basic and acidic residues). Residues 107 to 116 (QLTNQQNLAD) are compositionally biased toward polar residues. The span at 117 to 126 (QHQQYQYHQQ) shows a compositional bias: low complexity. Positions 127–140 (LAQTNFKTEPTNSA) are enriched in polar residues. Basic and acidic residues predominate over residues 144–167 (HGSEEWHRQRRENHKEVERKRRES). Positions 152-200 (QRRENHKEVERKRRESINTGIRELARLIPTTDTNKAQILQRAVEYIKRL) constitute a bHLH domain. Residues 190 to 223 (LQRAVEYIKRLKENENNNIEKWTLEKLLTEQAVS) adopt a coiled-coil conformation.

It localises to the nucleus. In terms of biological role, transcription factor that binds ribosomal protein gene promoters and rDNA locus with TBF1. Necessary for the expression of genes involved in assimilation of inorganic sulfate. Also required for the expression of respiratory genes and glycolytic genes. Does not bind to centromeres and is not necessary for efficient chromosome segregationas as does S.cerevisiae CBF1. The chain is Transcriptional regulator CBF1 (CBF1) from Candida albicans (strain SC5314 / ATCC MYA-2876) (Yeast).